Here is a 310-residue protein sequence, read N- to C-terminus: p-hydroxybenzoic acid efflux pump subunit AaeA (310 aa).

The helical transmembrane segment at 12-32 threads the bilayer; the sequence is AITLVLVILAFIAIFRAWVYY.

Belongs to the membrane fusion protein (MFP) (TC 8.A.1) family.

The protein localises to the cell inner membrane. In terms of biological role, forms an efflux pump with AaeB. The protein is p-hydroxybenzoic acid efflux pump subunit AaeA of Citrobacter koseri (strain ATCC BAA-895 / CDC 4225-83 / SGSC4696).